Here is a 594-residue protein sequence, read N- to C-terminus: uncharacterized protein (594 aa).

Its function is as follows. The presence of the two linear plasmids, termed pGKL1 and pGKL2, in strains of Kluyveromyces lactis confers the killer phenotype to the host cell, by promoting the secretion of a toxin able to inhibit the growth of sensitive strains. This is an uncharacterized protein from Kluyveromyces lactis (strain ATCC 8585 / CBS 2359 / DSM 70799 / NBRC 1267 / NRRL Y-1140 / WM37) (Yeast).